The primary structure comprises 468 residues: Gasdermin-C (468 aa).

The triggers pyroptosis stretch occupies residues 1-230 (MSYTFDWLSK…CVILTSANTK (230 aa)).

The protein belongs to the gasdermin family. In terms of assembly, homooligomer; homooligomeric ring-shaped pore complex containing 27-28 subunits when inserted in the membrane. In terms of processing, cleavage by CASP8 relieves autoinhibition by releasing the N-terminal moiety (Gasdermin-C, N-terminal) that initiates pyroptosis. Palmitoylated.

Its subcellular location is the cytoplasm. The protein localises to the cytosol. It is found in the cell membrane. Its activity is regulated as follows. The full-length protein before cleavage is inactive: intramolecular interactions between N- and C-terminal domains mediate autoinhibition in the absence of activation signal. The intrinsic pyroptosis-inducing activity is carried by the released N-terminal moiety (Gasdermin-C, N-terminal) following cleavage by caspase CASP8. Functionally, this form constitutes the precursor of the pore-forming protein: upon cleavage, the released N-terminal moiety (Gasdermin-C, N-terminal) binds to membranes and forms pores, triggering pyroptosis. Its function is as follows. Pore-forming protein that causes membrane permeabilization and pyroptosis. Produced by the cleavage of gasdermin-C by caspase CASP8 in response to death signals. After cleavage, moves to the plasma membrane where it strongly binds to membrane inner leaflet lipids. Homooligomerizes within the membrane and forms pores of 10-15 nanometers (nm) of inner diameter, triggering pyroptosis. This Mus musculus (Mouse) protein is Gasdermin-C.